Consider the following 337-residue polypeptide: tRNA N6-adenosine threonylcarbamoyltransferase (337 aa).

Positions 111 and 115 each coordinate Fe cation. Substrate contacts are provided by residues 134–138 (LVSGG), Asp-167, Gly-180, and Asn-272. Asp-300 is a Fe cation binding site.

This sequence belongs to the KAE1 / TsaD family. The cofactor is Fe(2+).

It is found in the cytoplasm. It carries out the reaction L-threonylcarbamoyladenylate + adenosine(37) in tRNA = N(6)-L-threonylcarbamoyladenosine(37) in tRNA + AMP + H(+). In terms of biological role, required for the formation of a threonylcarbamoyl group on adenosine at position 37 (t(6)A37) in tRNAs that read codons beginning with adenine. Is involved in the transfer of the threonylcarbamoyl moiety of threonylcarbamoyl-AMP (TC-AMP) to the N6 group of A37, together with TsaE and TsaB. TsaD likely plays a direct catalytic role in this reaction. The polypeptide is tRNA N6-adenosine threonylcarbamoyltransferase (Photorhabdus laumondii subsp. laumondii (strain DSM 15139 / CIP 105565 / TT01) (Photorhabdus luminescens subsp. laumondii)).